A 201-amino-acid polypeptide reads, in one-letter code: Ribosome maturation factor RimM (201 aa).

The region spanning 92–166 is the PRC barrel domain; it reads DEDEFYHADL…RVVVEPPANF (75 aa). The disordered stretch occupies residues 169-201; the sequence is PAGPQPAEGEEMPDGALEALEGEEAGAGTAPQP.

Belongs to the RimM family. In terms of assembly, binds ribosomal protein uS19.

The protein localises to the cytoplasm. Its function is as follows. An accessory protein needed during the final step in the assembly of 30S ribosomal subunit, possibly for assembly of the head region. Essential for efficient processing of 16S rRNA. May be needed both before and after RbfA during the maturation of 16S rRNA. It has affinity for free ribosomal 30S subunits but not for 70S ribosomes. This is Ribosome maturation factor RimM from Rhodospirillum centenum (strain ATCC 51521 / SW).